The following is a 956-amino-acid chain: Glutamate receptor ionotropic, kainate 4 (956 aa).

The signal sequence occupies residues 1 to 20 (MPRVSAPLVLLPAWLLMVAC). At 21-545 (SPHSLRIAAI…YFSFLDPFSP (525 aa)) the chain is on the extracellular side. N-linked (GlcNAc...) asparagine glycans are attached at residues N158, N220, N272, N286, N323, N408, N415, and N479. G500, T502, and R507 together coordinate L-glutamate. Residues 546-566 (GVWLFMLLAYLAVSCVLFLVA) traverse the membrane as a helical segment. Residues 567 to 623 (RLTPYEWYSPHPCAQGRCNLLVNQYSLGNSLWFPVGGFMQQGSTIAPRALSTRCVSG) are Cytoplasmic-facing. The chain crosses the membrane as a helical span at residues 624–644 (VWWAFTLIIISSYTANLAAFL). Residues 645–804 (TVQRMEVPIE…HRAKGLGMEN (160 aa)) lie on the Extracellular side of the membrane. The L-glutamate site is built by S674, S675, and E723. N736 is a glycosylation site (N-linked (GlcNAc...) asparagine). Residues 805-825 (IGGIFVVLICGLIVAIFMAML) traverse the membrane as a helical segment. Residues 826 to 956 (EFLWTLRHSE…DKTTNSSEPE (131 aa)) are Cytoplasmic-facing. The disordered stretch occupies residues 931–956 (LRARPSPARSEESLEWDKTTNSSEPE). The span at 939 to 948 (RSEESLEWDK) shows a compositional bias: basic and acidic residues.

It belongs to the glutamate-gated ion channel (TC 1.A.10.1) family. GRIK4 subfamily. Homodimer. Can form functional heteromeric receptors with GRIK1, GRIK2 and GRIK3 subunits. Forms a heteromeric complex with GRIK2. As to expression, expressed in the hippocampus and cerebellum (at protein level).

It localises to the cell membrane. The protein localises to the postsynaptic cell membrane. Its subcellular location is the presynaptic cell membrane. Its function is as follows. Ionotropic glutamate receptor that functions as a cation-permeable ligand-gated ion channel. Cannot form functional channels on its own and produces channel activity only in heteromeric assembly with GRIK1, GRIK2 and GRIK3 subunits. The chain is Glutamate receptor ionotropic, kainate 4 (Grik4) from Mus musculus (Mouse).